The following is a 47-amino-acid chain: Small ribosomal subunit protein uS14 (47 aa).

Residues cysteine 12, cysteine 15, cysteine 30, and cysteine 33 each coordinate Zn(2+).

This sequence belongs to the universal ribosomal protein uS14 family. Zinc-binding uS14 subfamily. In terms of assembly, part of the 30S ribosomal subunit. Requires Zn(2+) as cofactor.

Its function is as follows. Binds 16S rRNA, required for the assembly of 30S particles. The sequence is that of Small ribosomal subunit protein uS14 from Methanosphaera stadtmanae (strain ATCC 43021 / DSM 3091 / JCM 11832 / MCB-3).